The following is a 343-amino-acid chain: Transcription factor MYB11 (343 aa).

2 HTH myb-type domains span residues 9 to 61 and 62 to 116; these read KVGI…INYL and RSDI…SRKL. 2 DNA-binding regions (H-T-H motif) span residues 37 to 61 and 89 to 112; these read WRSLPKNAGLKRCGKSCRLRWINYL and WSTIASNLPGRTDNEIKNYWNSHL. The disordered stretch occupies residues 126 to 146; that stretch reads ANTVENAPPPPKRRPGRTSRS.

As to expression, expressed in seedlings, roots, cotyledons, leaves and apical meristems.

It localises to the nucleus. Its function is as follows. Modulates overall growth by reducing the proliferation activity of meristematic cells and delaying development. Flavonol-specific transcription activator involved in the regulation of several genes of flavonoid biosynthesis. Activates the expression of CHS, CHI, F3H and FLS1. Confers tolerance to UV-B. This Arabidopsis thaliana (Mouse-ear cress) protein is Transcription factor MYB11.